We begin with the raw amino-acid sequence, 208 residues long: Proheparin-binding EGF-like growth factor (208 aa).

The N-terminal stretch at 1-19 (MKLLPSVVLKLLLAAVLSA) is a signal peptide. The propeptide occupies 20 to 62 (LVTGESLEQLRRGLAAGTSNPDPSTGSTDQLLRLGGGRDRKVR). Residues 20-160 (LVTGESLEQL…ENRLYTYDHT (141 aa)) are Extracellular-facing. The tract at residues 34-55 (AAGTSNPDPSTGSTDQLLRLGG) is disordered. The segment covering 36–49 (GTSNPDPSTGSTDQ) has biased composition (polar residues). 2 O-linked (GalNAc...) threonine glycosylation sites follow: Thr75 and Thr85. The disordered stretch occupies residues 81–104 (QALATPSKEEHGKRKKKGKGLGKK). Residues 93–102 (KRKKKGKGLG) are compositionally biased toward basic residues. Residues 104–144 (KRDPCLRKYKDFCIHGECKYVKELRAPSCICHPGYHGERCH) form the EGF-like domain. Intrachain disulfides connect Cys108/Cys121, Cys116/Cys132, and Cys134/Cys143. The tract at residues 136-148 (PGYHGERCHGLSL) is toxin-binding domain. Positions 149–208 (PVENRLYTYDHTTILAVVAVVLSSVCLLVIVGLLMFRYHRRGGYDVENEEKVKLGMTNSH) are cleaved as a propeptide — C-terminal. The chain crosses the membrane as a helical span at residues 161–184 (TILAVVAVVLSSVCLLVIVGLLMF). Over 185–208 (RYHRRGGYDVENEEKVKLGMTNSH) the chain is Cytoplasmic.

As to quaternary structure, interacts with EGFR and ERBB4. Interacts with FBLN1. In terms of processing, O-glycosylated.

It localises to the secreted. The protein resides in the extracellular space. The protein localises to the cell membrane. Functionally, growth factor that mediates its effects via EGFR, ERBB2 and ERBB4. Required for normal cardiac valve formation and normal heart function. Promotes smooth muscle cell proliferation. May be involved in macrophage-mediated cellular proliferation. It is mitogenic for fibroblasts, but not endothelial cells. It is able to bind EGF receptor/EGFR with higher affinity than EGF itself and is a far more potent mitogen for smooth muscle cells than EGF. Also acts as a diphtheria toxin receptor. The sequence is that of Proheparin-binding EGF-like growth factor (HBEGF) from Chlorocebus aethiops (Green monkey).